The chain runs to 423 residues: Glutamate-1-semialdehyde 2,1-aminomutase (423 aa).

Lys258 is subject to N6-(pyridoxal phosphate)lysine.

It belongs to the class-III pyridoxal-phosphate-dependent aminotransferase family. HemL subfamily. Pyridoxal 5'-phosphate serves as cofactor.

It localises to the cytoplasm. It carries out the reaction (S)-4-amino-5-oxopentanoate = 5-aminolevulinate. Its pathway is porphyrin-containing compound metabolism; protoporphyrin-IX biosynthesis; 5-aminolevulinate from L-glutamyl-tRNA(Glu): step 2/2. This chain is Glutamate-1-semialdehyde 2,1-aminomutase, found in Pyrobaculum aerophilum (strain ATCC 51768 / DSM 7523 / JCM 9630 / CIP 104966 / NBRC 100827 / IM2).